Here is a 350-residue protein sequence, read N- to C-terminus: UDP-N-acetylenolpyruvoylglucosamine reductase (350 aa).

The region spanning 25-194 (VGPVARRLIT…LDVGGRSAPL (170 aa)) is the FAD-binding PCMH-type domain. Residue Arg166 is part of the active site. Ser243 (proton donor) is an active-site residue. Glu342 is an active-site residue.

The protein belongs to the MurB family. Requires FAD as cofactor.

The protein resides in the cytoplasm. The enzyme catalyses UDP-N-acetyl-alpha-D-muramate + NADP(+) = UDP-N-acetyl-3-O-(1-carboxyvinyl)-alpha-D-glucosamine + NADPH + H(+). Its pathway is cell wall biogenesis; peptidoglycan biosynthesis. In terms of biological role, cell wall formation. In Mycobacterium sp. (strain MCS), this protein is UDP-N-acetylenolpyruvoylglucosamine reductase.